A 39-amino-acid chain; its full sequence is uncharacterized protein (39 aa).

This is an uncharacterized protein from Saccharomyces cerevisiae (strain ATCC 204508 / S288c) (Baker's yeast).